Here is a 1118-residue protein sequence, read N- to C-terminus: cGMP-specific 3',5'-cyclic phosphodiesterase (1118 aa).

The segment at 1 to 142 (MTDVSSPAGG…KASTTASQQD (142 aa)) is disordered. The segment covering 18-33 (STTSSSSAATTSASSS) has biased composition (low complexity). Residues 34-45 (KPLTNGANKTAI) show a composition bias toward polar residues. Composition is skewed to low complexity over residues 46-56 (STAAGGVTPGA) and 63-72 (GAIPASSSSG). Positions 84 to 101 (SNNNRPAVTNRSSETKLM) are enriched in polar residues. A compositionally biased stretch (low complexity) spans 102–128 (TPTGSSSSPSQSPSQTQASIQTQTSQQ). GAF domains lie at 247–399 (DIDV…GIGI) and 431–612 (NLEC…GLGI). The region spanning 642 to 965 (SQDQTEKLTQ…RNWQDLAEKV (324 aa)) is the PDEase domain. The active-site Proton donor is histidine 718. Positions 722, 758, 759, and 869 each coordinate a divalent metal cation. Disordered stretches follow at residues 1006–1035 (QQSQHGSEDSHTPEHQRSGSRLSMKKTGAL) and 1065–1118 (SHVS…CALL). 2 stretches are compositionally biased toward basic and acidic residues: residues 1011 to 1022 (GSEDSHTPEHQR) and 1065 to 1075 (SHVSEDMDDKS). The span at 1084–1104 (ASGSMGRMSASSSTSSAGGQM) shows a compositional bias: low complexity. The span at 1108-1118 (SKKRSKLCALL) shows a compositional bias: basic residues. Position 1115 is a cysteine methyl ester (cysteine 1115). The S-farnesyl cysteine moiety is linked to residue cysteine 1115. The propeptide at 1116–1118 (ALL) is removed in mature form.

The protein belongs to the cyclic nucleotide phosphodiesterase family. Interacts with PrBP. A divalent metal cation is required as a cofactor. As to expression, expressed in Malpighian tubule principal cells. Also expressed in adult head.

It is found in the cell membrane. The catalysed reaction is 3',5'-cyclic GMP + H2O = GMP + H(+). Its activity is regulated as follows. Inhibited by sildenafil and zaprinast. In terms of biological role, hydrolyzes the second messenger cGMP, which is a key regulator of many important physiological processes. Has cAMP phosphodiesterase activity in vitro but not in vivo. Has a role regulating cGMP transport in Malpighian tubule principal cells. In Drosophila melanogaster (Fruit fly), this protein is cGMP-specific 3',5'-cyclic phosphodiesterase (Pde6).